The primary structure comprises 120 residues: MDYEFLRDITGVVKVRMSMGHEVVGHWFNEEVKENLALLDEVEQAAHALKGSERSWQRAGHEYTLWMDGEEVMVRANQLEFAGDEMEEGMNYYDEESLSLCGVEDFLQVVAAYRNFVQQK.

It belongs to the UPF0231 family.

The polypeptide is UPF0231 protein YacL (Escherichia coli O139:H28 (strain E24377A / ETEC)).